The chain runs to 228 residues: 5'(3')-deoxyribonucleotidase, mitochondrial (228 aa).

The transit peptide at 1 to 31 directs the protein to the mitochondrion; sequence MIRLGGWCARRLCSAAVPAGRRGAAGGLGLA. Asp-41 functions as the Nucleophile in the catalytic mechanism. The Mg(2+) site is built by Asp-41 and Asp-43. Asp-43 (proton donor) is an active-site residue. Substrate contacts are provided by Asp-43, Phe-49, Phe-75, Trp-76, Val-77, Trp-96, Thr-130, and Lys-165. Asp-176 is a binding site for Mg(2+).

This sequence belongs to the 5'(3')-deoxyribonucleotidase family. In terms of assembly, homodimer. The cofactor is Mg(2+). In terms of tissue distribution, highly expressed in heart, brain and skeletal muscle. Detected at very low levels in kidney and pancreas.

It localises to the mitochondrion. Its function is as follows. Dephosphorylates specifically the 5' and 2'(3')-phosphates of uracil and thymine deoxyribonucleotides, and so protects mitochondrial DNA replication from excess dTTP. Has only marginal activity towards dIMP and dGMP. The polypeptide is 5'(3')-deoxyribonucleotidase, mitochondrial (NT5M) (Homo sapiens (Human)).